We begin with the raw amino-acid sequence, 58 residues long: Putative calcium channel toxin 196 (58 aa).

A signal peptide spans 1-16 (GSLLLVLFLLSVICYA). A propeptide spanning residues 17–26 (EIAAGPTKCQ) is cleaved from the precursor. 3 cysteine pairs are disulfide-bonded: C25/C38, C31/C43, and C37/C52.

Belongs to the scorpion calcin-like family. KTX subfamily. Expressed by the venom gland.

Its subcellular location is the secreted. May inhibit voltage-gated potassium channels Kv1.1/KCNA1, hKv1.2/KCNA2, and Kv1.3/KCNA3. May also increase intracellular calcium release through the activation of nuclear inositol 1,4,5-trisphosphate receptors (ITPR) of cardiomyocytes, thereby causing an increase in the contraction frequency of these cells. The sequence is that of Putative calcium channel toxin 196 from Lychas mucronatus (Chinese swimming scorpion).